The sequence spans 67 residues: Mu-conotoxin TsIIIA (67 aa).

An N-terminal signal peptide occupies residues 1 to 20 (MMSKLGVLLTICLLLFPLTA). The propeptide occupies 21-48 (VPLDGDQPADQPAERKQNEQHPLFDQKR). Intrachain disulfides connect cysteine 50/cysteine 59, cysteine 51/cysteine 64, and cysteine 55/cysteine 65.

Belongs to the conotoxin M superfamily. In terms of tissue distribution, expressed by the venom duct.

Its subcellular location is the secreted. Functionally, mu-conotoxins block voltage-gated sodium channels (Nav). This toxin specifically inhibits mammalian Nav1.8/SCN10A sodium currents (IC(50)=2.11 uM) without inducing a shift in the current-voltage relationship of this channel. In vivo, shows potent analgesic activity in a mice hotplate analgesic assay. In addition, this toxin has better analgesic effects than Ziconotide, an analgesic drug. The protein is Mu-conotoxin TsIIIA of Conus tessulatus (Tessellate cone).